The sequence spans 168 residues: G/U mismatch-specific DNA glycosylase (168 aa).

Belongs to the uracil-DNA glycosylase (UDG) superfamily. TDG/mug family. Binds DNA as a monomer.

It is found in the cytoplasm. It carries out the reaction Specifically hydrolyzes mismatched double-stranded DNA and polynucleotides, releasing free uracil.. In terms of biological role, excises ethenocytosine and uracil, which can arise by alkylation or deamination of cytosine, respectively, from the corresponding mispairs with guanine in ds-DNA. It is capable of hydrolyzing the carbon-nitrogen bond between the sugar-phosphate backbone of the DNA and the mispaired base. The complementary strand guanine functions in substrate recognition. Required for DNA damage lesion repair in stationary-phase cells. In Escherichia fergusonii (strain ATCC 35469 / DSM 13698 / CCUG 18766 / IAM 14443 / JCM 21226 / LMG 7866 / NBRC 102419 / NCTC 12128 / CDC 0568-73), this protein is G/U mismatch-specific DNA glycosylase.